The following is a 303-amino-acid chain: Ornithine carbamoyltransferase (303 aa).

Carbamoyl phosphate is bound by residues 52–55 (STRT), glutamine 79, arginine 103, and 130–133 (HPCQ). L-ornithine is bound by residues asparagine 161, aspartate 222, and 226–227 (SM). Carbamoyl phosphate-binding positions include 262 to 263 (CL) and arginine 290.

The protein belongs to the aspartate/ornithine carbamoyltransferase superfamily. OTCase family.

It is found in the cytoplasm. It catalyses the reaction carbamoyl phosphate + L-ornithine = L-citrulline + phosphate + H(+). It functions in the pathway amino-acid biosynthesis; L-arginine biosynthesis; L-arginine from L-ornithine and carbamoyl phosphate: step 1/3. Reversibly catalyzes the transfer of the carbamoyl group from carbamoyl phosphate (CP) to the N(epsilon) atom of ornithine (ORN) to produce L-citrulline. In Geobacter metallireducens (strain ATCC 53774 / DSM 7210 / GS-15), this protein is Ornithine carbamoyltransferase.